The chain runs to 373 residues: MPDLKRAIGLMSGTSMDGIDIALLATDGENWIERRASASMDYSDGFRARLKAGLVDARAIKDRAERPGLLRQLEHDLTLLHAVAVHDFLHEQGLQPHQIDVIGFHGQTVLHRPNESLTVQIGDGALLARETGIPVVYDMRAEDMRHGGQGAPLIPAYHAALAANLPLGLKGPVVFVNIGGISNLTYVGEDGALIAYDSGPGNMLIDQWMELHGHGRFDPGGATAMSGSVDRNTAHRYLEHEFFKGNHRRSLDRGDFAIPAKGELNLADGARTLAFVSAAAILKSASHLPARPRTYVVSGGGRKNGALMDELTALAEREGAHVIDADNAGFDGDAMEAEAWAYLAVRSLCGLPLTYPSTTGCDKPVSGGVPVRP.

13-20 (GTSMDGID) provides a ligand contact to ATP.

Belongs to the anhydro-N-acetylmuramic acid kinase family.

It carries out the reaction 1,6-anhydro-N-acetyl-beta-muramate + ATP + H2O = N-acetyl-D-muramate 6-phosphate + ADP + H(+). It participates in amino-sugar metabolism; 1,6-anhydro-N-acetylmuramate degradation. It functions in the pathway cell wall biogenesis; peptidoglycan recycling. In terms of biological role, catalyzes the specific phosphorylation of 1,6-anhydro-N-acetylmuramic acid (anhMurNAc) with the simultaneous cleavage of the 1,6-anhydro ring, generating MurNAc-6-P. Is required for the utilization of anhMurNAc either imported from the medium or derived from its own cell wall murein, and thus plays a role in cell wall recycling. This chain is Anhydro-N-acetylmuramic acid kinase, found in Brucella suis (strain ATCC 23445 / NCTC 10510).